A 95-amino-acid chain; its full sequence is Large ribosomal subunit protein bL25 (95 aa).

The protein belongs to the bacterial ribosomal protein bL25 family. As to quaternary structure, part of the 50S ribosomal subunit; part of the 5S rRNA/L5/L18/L25 subcomplex. Contacts the 5S rRNA. Binds to the 5S rRNA independently of L5 and L18.

In terms of biological role, this is one of the proteins that binds to the 5S RNA in the ribosome where it forms part of the central protuberance. This chain is Large ribosomal subunit protein bL25, found in Shewanella oneidensis (strain ATCC 700550 / JCM 31522 / CIP 106686 / LMG 19005 / NCIMB 14063 / MR-1).